We begin with the raw amino-acid sequence, 436 residues long: APO protein 1, chloroplastic (436 aa).

The transit peptide at 1 to 47 (MLLVSPACRGVYLQTIDPKPIDFSARASYALCFQIPTSIPKRECLMR) directs the protein to the chloroplast. 2 APO domains span residues 155–240 (ACSE…EIPE) and 329–414 (ACGY…RVPQ).

The protein belongs to the APO family. Expressed at low level. Expressed at higher level in leaves. Expressed at lower level in roots, stems, siliques and flowers.

It is found in the plastid. It localises to the chloroplast. Involved in the stable assembly of several 4Fe-4S cluster-containing complexes of chloroplasts. May participate in 4Fe-4S cofactor incorporation into psaA and/or psaB during translation. The polypeptide is APO protein 1, chloroplastic (APO1) (Arabidopsis thaliana (Mouse-ear cress)).